A 302-amino-acid chain; its full sequence is Sulfate adenylyltransferase subunit 2 (302 aa).

Belongs to the PAPS reductase family. CysD subfamily. Heterodimer composed of CysD, the smaller subunit, and CysN.

The catalysed reaction is sulfate + ATP + H(+) = adenosine 5'-phosphosulfate + diphosphate. The protein operates within sulfur metabolism; hydrogen sulfide biosynthesis; sulfite from sulfate: step 1/3. In terms of biological role, with CysN forms the ATP sulfurylase (ATPS) that catalyzes the adenylation of sulfate producing adenosine 5'-phosphosulfate (APS) and diphosphate, the first enzymatic step in sulfur assimilation pathway. APS synthesis involves the formation of a high-energy phosphoric-sulfuric acid anhydride bond driven by GTP hydrolysis by CysN coupled to ATP hydrolysis by CysD. The polypeptide is Sulfate adenylyltransferase subunit 2 (Parabacteroides distasonis (strain ATCC 8503 / DSM 20701 / CIP 104284 / JCM 5825 / NCTC 11152)).